The following is a 312-amino-acid chain: MSAFSEAALEKKLSELSNSQQSVQTLSLWLIHHRKHSRPIVTVWERELRKAKPNRKLTFLYLANDVIQNSKRKGPEFTKDFAPVIVEAFKHVSSETDESCKKHLGRVLSIWEERSVYENDVLEQLKHALYGDKKARKRTYEQIKVDENENCSSLGSPSEPPQTLDLVRALQDLENAASGDAAVHQRIASLPVEVQEVSLLEKITDKESGERLSKMVEDACMLLADYNGRLAAEIDDRKQLTRMLADFLRCQKEALAEKEHKLEEYKRKLARVSLVRKELRARIQSLPDLSRLPNVTGSHMHLPFAGDIYSED.

Position 2 is an N-acetylserine (S2). A CID domain is found at 2-133; that stretch reads SAFSEAALEK…QLKHALYGDK (132 aa). Residues S153, S156, and S285 each carry the phosphoserine modification. A coiled-coil region spans residues 244 to 286; sequence LADFLRCQKEALAEKEHKLEEYKRKLARVSLVRKELRARIQSL.

This sequence belongs to the UPF0400 (RTT103) family. In terms of assembly, may form a heterodimer with RPRD1B. Associates with the RNA polymerase II subunit POLR2A (via CTD phosphorylated at 'Ser-2' and 'Ser-7' of the heptad repeats).

The protein resides in the nucleus. Its function is as follows. Interacts with phosphorylated C-terminal heptapeptide repeat domain (CTD) of the largest RNA polymerase II subunit POLR2A, and participates in dephosphorylation of the CTD by RPAP2. May act as a negative regulator of cyclin-D1 (CCND1) and cyclin-E (CCNE1) in the cell cycle. This chain is Regulation of nuclear pre-mRNA domain-containing protein 1A (Rprd1a), found in Mus musculus (Mouse).